We begin with the raw amino-acid sequence, 532 residues long: Berberine bridge enzyme-like 23 (532 aa).

The N-terminal stretch at 1-22 is a signal peptide; sequence MRTLEAFALSLFLVFLVKWVNS. A disulfide bond links C36 and C102. A glycan (N-linked (GlcNAc...) asparagine) is linked at N78. One can recognise an FAD-binding PCMH-type domain in the interval 80–256; that stretch reads TSQKPILIVT…LSWKVKLVRV (177 aa). The 6-(S-cysteinyl)-8alpha-(pros-histidyl)-FAD (His-Cys) cross-link spans 117 to 180; that stretch reads HDYEGLSYLS…KIHGFPAGTC (64 aa). N-linked (GlcNAc...) asparagine glycosylation is found at N272 and N487.

It belongs to the oxygen-dependent FAD-linked oxidoreductase family. Requires FAD as cofactor. The FAD cofactor is bound via a bicovalent 6-S-cysteinyl, 8alpha-N1-histidyl FAD linkage. Accumulates in cell walls of etiolated hypocotyls.

It localises to the secreted. Its subcellular location is the cell wall. The protein is Berberine bridge enzyme-like 23 of Arabidopsis thaliana (Mouse-ear cress).